The sequence spans 523 residues: Vanin-like protein 3 (523 aa).

Positions 1–19 are cleaved as a signal peptide; that stretch reads MAVFLRRFLWLISFTLVLT. Residues 29–298 enclose the CN hydrolase domain; that stretch reads YIAGVVEYRP…RKLLLAKVPL (270 aa). Asparagine 64 carries N-linked (GlcNAc...) asparagine glycosylation. Residue glutamate 74 is the Proton acceptor of the active site. Lysine 167 (proton donor) is an active-site residue. N-linked (GlcNAc...) asparagine glycans are attached at residues asparagine 177 and asparagine 192. Residue cysteine 200 is the Nucleophile of the active site. N-linked (GlcNAc...) asparagine glycosylation is found at asparagine 330 and asparagine 468. A lipid anchor (GPI-anchor amidated asparagine) is attached at asparagine 498. A propeptide spans 499–523 (removed in mature form); it reads GGAGRLGTLLFLLITPLIMMHLFRE.

It belongs to the carbon-nitrogen hydrolase superfamily. BTD/VNN family. As to expression, expressed in third instar larvae.

Its subcellular location is the cell membrane. The protein is Vanin-like protein 3 of Drosophila melanogaster (Fruit fly).